We begin with the raw amino-acid sequence, 396 residues long: S-adenosylmethionine synthase (396 aa).

H16 contributes to the ATP binding site. D18 serves as a coordination point for Mg(2+). E44 is a binding site for K(+). Positions 57 and 100 each coordinate L-methionine. Residues 100-110 (QSPDINQGVDR) form a flexible loop region. ATP contacts are provided by residues 165–167 (DAK), D240, 246–247 (RK), A263, and K267. D240 lines the L-methionine pocket. K271 serves as a coordination point for L-methionine.

Belongs to the AdoMet synthase family. As to quaternary structure, homotetramer; dimer of dimers. It depends on Mg(2+) as a cofactor. K(+) is required as a cofactor.

The protein localises to the cytoplasm. The catalysed reaction is L-methionine + ATP + H2O = S-adenosyl-L-methionine + phosphate + diphosphate. It functions in the pathway amino-acid biosynthesis; S-adenosyl-L-methionine biosynthesis; S-adenosyl-L-methionine from L-methionine: step 1/1. Functionally, catalyzes the formation of S-adenosylmethionine (AdoMet) from methionine and ATP. The overall synthetic reaction is composed of two sequential steps, AdoMet formation and the subsequent tripolyphosphate hydrolysis which occurs prior to release of AdoMet from the enzyme. The sequence is that of S-adenosylmethionine synthase from Pseudomonas fluorescens (strain Pf0-1).